The primary structure comprises 203 residues: Sporulation delaying protein C (203 aa).

The N-terminal stretch at 1–32 (MKSKLLRLLIVSMVTILVFSLVGLSKESSTSA) is a signal peptide. A propeptide spans 33–140 (KENHTFSGED…KYSSNKVTPS (108 aa)) (removed in mature form). C141 and C147 form a disulfide bridge. Residues 183-203 (SASNNSDLEAAAAKTLKLIHQ) constitute a propeptide, removed in mature form.

As to quaternary structure, proprotein probably interacts with chaperone CsaA. In terms of processing, production of active SDP (able to induce SdpI and kill cells) is a multi-step process that requires signal peptide cleavage (probably by SipS or SipT) as well as SdpA and SdpB. The disulfide bond is not required for maximum toxicity.

It is found in the secreted. In terms of biological role, produces a 42-residue extracellular sporulation delaying protein (SDP) that collapses the proton motive force (probably both the membrane potential and pH gradient) across the cell membrane, which leads to autolysis; may form a proton channel. Induces the lysis of other B.subtilis cells that have not entered the sporulation pathway, inducing cannibalism to provide a source of nutrients to support sporulation, and at the same time delaying commitment to the energetically expensive and irreversible onset of sporulation. Addition of SDP to liquid cultures halts growth, leads to increased cell permeability and eventually cell lysis in a significant subset of the population, although some cells survive and resume growth after a lag period. Effects of SDP are irreversible within 10 minutes. Addition of SDP to solid cultures induces killing, it is much more effective than SKF (AC O31422). Has antibiotic action against Gram-positive Firmicutes (L.acidophilus, M.megaterium, P.polymyxa, S.aureus, S.epidermidis) but not Actinobacteria M.luteus or Gram-negative P.aeruginosa or K.pneumoniae. SDP induces expression of the sdpR-sdpI operon. Its maturation is dependent on SdpA and SdpB. Also functions as a ligand, binds to SdpI triggering a signal transduction cascade that protects the cell against the toxic effects of its own SDP. This is Sporulation delaying protein C from Bacillus subtilis (strain 168).